The following is a 409-amino-acid chain: Iron(III) salmochelin esterase (409 aa).

It belongs to the Fes family.

It is found in the cytoplasm. The catalysed reaction is Fe(III)-C-5-deoxy-beta-D-glucosyl-enterobactin + H2O = Fe(III)-{di[N-(2,3-dihydroxybenzoyl)-L-seryl]-N-(C-5-[deoxy-beta-D-glucosyl]-2,3-dihydroxybenzoyl)-L-serine} + H(+). The enzyme catalyses Fe(III)-{di[N-(2,3-dihydroxybenzoyl)-L-seryl]-N-(C-5-[deoxy-beta-D-glucosyl]-2,3-dihydroxybenzoyl)-L-serine} + H2O + H(+) = Fe(III)-{N-(2,3-dihydroxybenzoyl)-L-seryl-N-(C-5-[deoxy-beta-D-glucosyl]-2,3-dihydroxybenzoyl)-L-serine} + N-(2,3-dihydroxybenzoyl)-L-serine. It catalyses the reaction Fe(III)-{N-(2,3-dihydroxybenzoyl)-L-seryl-[N-(C-5-[deoxy-beta-D-glucosyl]-2,3-dihydroxybenzoyl)-L-serine]2} + H2O + H(+) = Fe(III)-{N-(2,3-dihydroxybenzoyl)-L-seryl-N-(C-5-[deoxy-beta-D-glucosyl]-2,3-dihydroxybenzoyl)-L-serine} + N-(C-5-[deoxy-beta-D-glucosyl]-2,3-dihydroxybenzoyl)-L-serine. It carries out the reaction Fe(III)-di(C-5-deoxy-beta-D-glucosyl)-enterobactin + H2O = Fe(III)-{N-(2,3-dihydroxybenzoyl)-L-seryl-[N-(C-5-[deoxy-beta-D-glucosyl]-2,3-dihydroxybenzoyl)-L-serine]2} + H(+). The catalysed reaction is Fe(III)-{N-(2,3-dihydroxybenzoyl)-L-seryl-[N-(C-5-[deoxy-beta-D-glucosyl]-2,3-dihydroxybenzoyl)-L-serine]2} + H2O + H(+) = Fe(III)-[N-(C-5-[deoxy-beta-D-glucosyl]-2,3-dihydroxybenzoyl)-L-serine]2 + N-(2,3-dihydroxybenzoyl)-L-serine. The enzyme catalyses Fe(III)-[N-(C-5-[deoxy-beta-D-glucosyl]-2,3-dihydroxybenzoyl)-L-serine]2 + H2O + H(+) = Fe(III)-[N-(C-5-[deoxy-beta-D-glucosyl]-2,3-dihydroxybenzoyl)-L-serine] + N-(C-5-[deoxy-beta-D-glucosyl]-2,3-dihydroxybenzoyl)-L-serine. Functionally, catalyzes the hydrolysis of both the apo and Fe3(+)-bound forms of enterobactin (Ent), monoglucosyl-C-Ent (MGE), diglucosyl-C-Ent (DGE) and triglucosyl-C-Ent (TGE). Shows higher catalytic efficiencies on Fe3(+)-bound forms. The initial linear trimer products are, in turn, very good substrates for further hydrolytic cleavage by IroD, leading to complete degradation of the trilactone to DHB-Ser and/or Glc-DHB-Ser monomers. Hydrolyzes MGE and DGE regioselectively. May be the ferric MGE/DGE esterase responsible for cytoplasmic iron release. The sequence is that of Iron(III) salmochelin esterase from Escherichia coli O6:H1 (strain CFT073 / ATCC 700928 / UPEC).